Consider the following 386-residue polypeptide: WD repeat-containing protein 89 (386 aa).

WD repeat units lie at residues 21–65, 68–107, 112–156, 167–207, 213–253, and 318–357; these read KEPT…LLRE, GSPG…EKPA, GYPS…QDLS, THSD…EEDA, NSVS…TDEP, and GHAA…KTFT.

The sequence is that of WD repeat-containing protein 89 (Wdr89) from Rattus norvegicus (Rat).